The sequence spans 173 residues: MSMSANTMIFMILGASIVMAIACLMDMNALLDRFHNYILPHLRGEDRVCHCNCGRHHIHYVIPYDGDQSVVDASENYFVTDNVTKQEIDLMLGLLLGFCISWFLVWMDGVLHCAVRAWRAGRRYDGSWTWLPKLCSLRELGRRPHRPFEEPTGNMVHVKQKLYHNGHPSPRHL.

Helical transmembrane passes span 5–25 (ANTM…ACLM) and 90–110 (LMLG…MDGV). At S169 the chain carries Phosphoserine.

The protein resides in the synapse. The protein localises to the cell membrane. The chain is Transmembrane protein 240 (Tmem240) from Mus musculus (Mouse).